A 616-amino-acid chain; its full sequence is Proline dehydrogenase 1, mitochondrial (616 aa).

It belongs to the proline oxidase family. Requires FAD as cofactor.

Its subcellular location is the mitochondrion matrix. It catalyses the reaction L-proline + a quinone = (S)-1-pyrroline-5-carboxylate + a quinol + H(+). Its pathway is amino-acid degradation; L-proline degradation into L-glutamate; L-glutamate from L-proline: step 1/2. Functionally, converts proline to delta-1-pyrroline-5-carboxylate. Through proline catabolism, promotes reactive oxygen species (ROS) production and the transcription of skn-1 target genes in response to bacterial infection by P.aeruginosa. In Caenorhabditis elegans, this protein is Proline dehydrogenase 1, mitochondrial.